The following is a 327-amino-acid chain: Probable cell division protein WhiA (327 aa).

The H-T-H motif DNA-binding region spans 275–308 (SLEELGRLADPPMTKDAVAGRIRRLLSMADRKAK).

It belongs to the WhiA family.

In terms of biological role, involved in cell division and chromosome segregation. The polypeptide is Probable cell division protein WhiA (Mycobacterium avium (strain 104)).